A 316-amino-acid chain; its full sequence is HPr kinase/phosphorylase (316 aa).

Catalysis depends on residues His143 and Lys164. Residue 158–165 coordinates ATP; it reads GEAGSGKS. Ser165 serves as a coordination point for Mg(2+). The active-site Proton acceptor; for phosphorylation activity. Proton donor; for dephosphorylation activity is Asp182. An important for the catalytic mechanism of both phosphorylation and dephosphorylation region spans residues 206 to 215; that stretch reads LEVRGLGVLN. Residue Glu207 coordinates Mg(2+). Arg251 is a catalytic residue. An important for the catalytic mechanism of dephosphorylation region spans residues 272 to 277; sequence PVMPGR.

It belongs to the HPrK/P family. As to quaternary structure, homohexamer. Mg(2+) serves as cofactor.

It carries out the reaction [HPr protein]-L-serine + ATP = [HPr protein]-O-phospho-L-serine + ADP + H(+). The catalysed reaction is [HPr protein]-O-phospho-L-serine + phosphate + H(+) = [HPr protein]-L-serine + diphosphate. Functionally, catalyzes the ATP- as well as the pyrophosphate-dependent phosphorylation of a specific serine residue in HPr, a phosphocarrier protein of the phosphoenolpyruvate-dependent sugar phosphotransferase system (PTS). HprK/P also catalyzes the pyrophosphate-producing, inorganic phosphate-dependent dephosphorylation (phosphorolysis) of seryl-phosphorylated HPr (P-Ser-HPr). This Xylella fastidiosa (strain 9a5c) protein is HPr kinase/phosphorylase.